The sequence spans 1415 residues: DNA-directed RNA polymerase subunit beta'' (1415 aa).

Zn(2+) is bound by residues C217, C291, C298, and C301.

This sequence belongs to the RNA polymerase beta' chain family. RpoC2 subfamily. In plastids the minimal PEP RNA polymerase catalytic core is composed of four subunits: alpha, beta, beta', and beta''. When a (nuclear-encoded) sigma factor is associated with the core the holoenzyme is formed, which can initiate transcription. Zn(2+) is required as a cofactor.

The protein resides in the plastid. Its subcellular location is the chloroplast. It carries out the reaction RNA(n) + a ribonucleoside 5'-triphosphate = RNA(n+1) + diphosphate. In terms of biological role, DNA-dependent RNA polymerase catalyzes the transcription of DNA into RNA using the four ribonucleoside triphosphates as substrates. The chain is DNA-directed RNA polymerase subunit beta'' from Phaeodactylum tricornutum (strain CCAP 1055/1).